Here is a 331-residue protein sequence, read N- to C-terminus: Biotin synthase (331 aa).

The 226-residue stretch at 52 to 277 (PDVEVEGIIS…RTMLRFAGGR (226 aa)) folds into the Radical SAM core domain. Residues Cys-67, Cys-71, and Cys-74 each contribute to the [4Fe-4S] cluster site. Positions 110, 143, 202, and 272 each coordinate [2Fe-2S] cluster.

It belongs to the radical SAM superfamily. Biotin synthase family. As to quaternary structure, homodimer. It depends on [4Fe-4S] cluster as a cofactor. Requires [2Fe-2S] cluster as cofactor.

It catalyses the reaction (4R,5S)-dethiobiotin + (sulfur carrier)-SH + 2 reduced [2Fe-2S]-[ferredoxin] + 2 S-adenosyl-L-methionine = (sulfur carrier)-H + biotin + 2 5'-deoxyadenosine + 2 L-methionine + 2 oxidized [2Fe-2S]-[ferredoxin]. Its pathway is cofactor biosynthesis; biotin biosynthesis; biotin from 7,8-diaminononanoate: step 2/2. In terms of biological role, catalyzes the conversion of dethiobiotin (DTB) to biotin by the insertion of a sulfur atom into dethiobiotin via a radical-based mechanism. The chain is Biotin synthase from Mycolicibacterium vanbaalenii (strain DSM 7251 / JCM 13017 / BCRC 16820 / KCTC 9966 / NRRL B-24157 / PYR-1) (Mycobacterium vanbaalenii).